We begin with the raw amino-acid sequence, 118 residues long: Protein TusC (118 aa).

It belongs to the DsrF/TusC family. Heterohexamer, formed by a dimer of trimers. The hexameric TusBCD complex contains 2 copies each of TusB, TusC and TusD. The TusBCD complex interacts with TusE.

It is found in the cytoplasm. Functionally, part of a sulfur-relay system required for 2-thiolation of 5-methylaminomethyl-2-thiouridine (mnm(5)s(2)U) at tRNA wobble positions. This is Protein TusC from Salmonella typhi.